A 178-amino-acid polypeptide reads, in one-letter code: Probetacellulin (178 aa).

An N-terminal signal peptide occupies residues 1 to 31; it reads MARAAPGSGASPLPLLPALALGLVILHCVVA. Topologically, residues 32–118 are extracellular; sequence DGNSTRSPED…LFYLRGDRGQ (87 aa). The N-linked (GlcNAc...) asparagine glycan is linked to Asn34. The 41-residue stretch at 65–105 folds into the EGF-like domain; sequence HFSRCPKQYKHYCIKGRCRFVVAEQTPSCVCDEGYAGARCE. Cystine bridges form between Cys69/Cys82, Cys77/Cys93, and Cys95/Cys104. Positions 112–178 are cleaved as a propeptide — removed in mature form; sequence LRGDRGQILV…NDDIQETSIA (67 aa). The helical transmembrane segment at 119–139 threads the bilayer; the sequence is ILVICLIAVMVIFIILVVSIC. Over 140–178 the chain is Cytoplasmic; the sequence is TCCHPLRKRRKRRKKEEEMETLGKDITPINDDIQETSIA.

Monomer. Interacts with EGFR and ERBB4. As to expression, expressed in a wide range of tissues, including the mammary gland.

Its subcellular location is the secreted. The protein resides in the extracellular space. It is found in the cell membrane. Its function is as follows. Growth factor that binds to EGFR, ERBB4 and other EGF receptor family members. Potent mitogen for retinal pigment epithelial cells and vascular smooth muscle cells. The sequence is that of Probetacellulin (BTC) from Bos taurus (Bovine).